We begin with the raw amino-acid sequence, 338 residues long: RNA 3'-terminal phosphate cyclase (338 aa).

ATP-binding positions include Q103 and 283–287; that span reads YLADQ. The Tele-AMP-histidine intermediate role is filled by H308.

It belongs to the RNA 3'-terminal cyclase family. Type 1 subfamily.

The protein resides in the cytoplasm. It catalyses the reaction a 3'-end 3'-phospho-ribonucleotide-RNA + ATP = a 3'-end 2',3'-cyclophospho-ribonucleotide-RNA + AMP + diphosphate. In terms of biological role, catalyzes the conversion of 3'-phosphate to a 2',3'-cyclic phosphodiester at the end of RNA. The mechanism of action of the enzyme occurs in 3 steps: (A) adenylation of the enzyme by ATP; (B) transfer of adenylate to an RNA-N3'P to produce RNA-N3'PP5'A; (C) and attack of the adjacent 2'-hydroxyl on the 3'-phosphorus in the diester linkage to produce the cyclic end product. The biological role of this enzyme is unknown but it is likely to function in some aspects of cellular RNA processing. This chain is RNA 3'-terminal phosphate cyclase, found in Escherichia coli O127:H6 (strain E2348/69 / EPEC).